The sequence spans 145 residues: uncharacterized protein (145 aa).

This sequence to B.subtilis XkdJ.

This is an uncharacterized protein from Bacillus subtilis (strain 168).